Reading from the N-terminus, the 209-residue chain is Small ribosomal subunit protein uS3 (209 aa).

The 70-residue stretch at 38 to 107 (IRKVIKSKYA…RFIVNVEEIK (70 aa)) folds into the KH type-2 domain.

It belongs to the universal ribosomal protein uS3 family. Part of the 30S ribosomal subunit. Forms a tight complex with proteins S10 and S14.

Its function is as follows. Binds the lower part of the 30S subunit head. Binds mRNA in the 70S ribosome, positioning it for translation. The polypeptide is Small ribosomal subunit protein uS3 (Thermosipho melanesiensis (strain DSM 12029 / CIP 104789 / BI429)).